The following is a 219-amino-acid chain: MATREQQPEGRRLKVARIYLRASTDEQNLERQESLVAATRAAGYYVAGIYREKASGARADRPELLRMIADLQPGEVVVAEKIDRISRLPLAEAERLVASIRAKGAKLAVPGVVDLSELAAEANGVAKIVLESVQDMLLKLALQMARDDYEDRRERQRQGVQLAKAAGRYTGRKRDAGMHDRIITLRSGGSSIAKTAKLVGCSPSQVKRVWAAWNAQQQK.

Residues V15 to G159 enclose the Resolvase/invertase-type recombinase catalytic domain. S23 acts as the O-(5'-phospho-DNA)-serine intermediate in catalysis.

This sequence belongs to the site-specific recombinase resolvase family.

In terms of biological role, involved in plasmid partition. The sequence is that of Resolvase (parA) from Escherichia coli.